The chain runs to 221 residues: Epididymal secretory glutathione peroxidase (221 aa).

A signal peptide spans 1 to 21; the sequence is MTAWLGASYVLPILLVSFVQT. Cys-73 is a catalytic residue.

It belongs to the glutathione peroxidase family. In terms of tissue distribution, epididymis.

The protein localises to the secreted. It carries out the reaction 2 glutathione + H2O2 = glutathione disulfide + 2 H2O. In terms of biological role, protects cells and enzymes from oxidative damage, by catalyzing the reduction of hydrogen peroxide, lipid peroxides and organic hydroperoxide, by glutathione. May constitute a glutathione peroxidase-like protective system against peroxide damage in sperm membrane lipids. The sequence is that of Epididymal secretory glutathione peroxidase (GPX5) from Canis lupus familiaris (Dog).